A 251-amino-acid polypeptide reads, in one-letter code: Ubiquinone/menaquinone biosynthesis C-methyltransferase UbiE (251 aa).

Residues Thr-74, Asp-95, and 123 to 124 contribute to the S-adenosyl-L-methionine site; that span reads NA.

It belongs to the class I-like SAM-binding methyltransferase superfamily. MenG/UbiE family.

The catalysed reaction is a 2-demethylmenaquinol + S-adenosyl-L-methionine = a menaquinol + S-adenosyl-L-homocysteine + H(+). It catalyses the reaction a 2-methoxy-6-(all-trans-polyprenyl)benzene-1,4-diol + S-adenosyl-L-methionine = a 5-methoxy-2-methyl-3-(all-trans-polyprenyl)benzene-1,4-diol + S-adenosyl-L-homocysteine + H(+). Its pathway is quinol/quinone metabolism; menaquinone biosynthesis; menaquinol from 1,4-dihydroxy-2-naphthoate: step 2/2. The protein operates within cofactor biosynthesis; ubiquinone biosynthesis. Its function is as follows. Methyltransferase required for the conversion of demethylmenaquinol (DMKH2) to menaquinol (MKH2) and the conversion of 2-polyprenyl-6-methoxy-1,4-benzoquinol (DDMQH2) to 2-polyprenyl-3-methyl-6-methoxy-1,4-benzoquinol (DMQH2). The sequence is that of Ubiquinone/menaquinone biosynthesis C-methyltransferase UbiE from Marinomonas sp. (strain MWYL1).